Here is a 554-residue protein sequence, read N- to C-terminus: (E)-beta-caryophyllene synthase (554 aa).

The Mn(2+) site is built by Asp313 and Asp317. A DDXXD motif motif is present at residues 313–317; sequence DDTYD. Homodimerization stretches follow at residues 319–325 and 391–427; these read YGTLDEL and EAQW…LAVI. Mn(2+)-binding residues include Asp457 and Glu465.

The protein belongs to the terpene synthase family. As to quaternary structure, homodimer. It depends on Mn(2+) as a cofactor. Requires Mg(2+) as cofactor. In terms of tissue distribution, expressed in peltate glandular trichomes. Present at low levels in flowers, leaves and stems.

The enzyme catalyses (2E,6E)-farnesyl diphosphate = (-)-(E)-beta-caryophyllene + diphosphate. It carries out the reaction (2E,6E)-farnesyl diphosphate = alpha-humulene + diphosphate. The protein operates within secondary metabolite biosynthesis; terpenoid biosynthesis. Involved in the biosynthesis of phenolic sesquiterpenes natural products. Sesquiterpene synthase converting (2E,6E)-farnesyl diphosphate (FPP) to (E)-beta-caryophyllene and alpha-humulene. This chain is (E)-beta-caryophyllene synthase, found in Origanum vulgare (Wild marjoram).